A 2890-amino-acid polypeptide reads, in one-letter code: Bifunctional DNA-directed RNA polymerase subunit beta-beta' (2890 aa).

The segment at 1–1377 (MSKKIPLKNR…DINIFGDEMD (1377 aa)) is DNA-directed RNA polymerase subunit beta. The segment at 1384–2890 (PIVIKEDDRP…LRTIEDSPKI (1507 aa)) is DNA-directed RNA polymerase subunit beta'. Residues Cys-1449, Cys-1451, Cys-1465, and Cys-1468 each coordinate Zn(2+). 3 residues coordinate Mg(2+): Asp-1849, Asp-1851, and Asp-1853. Positions 2179, 2253, 2260, and 2263 each coordinate Zn(2+).

It in the N-terminal section; belongs to the RNA polymerase beta chain family. In the C-terminal section; belongs to the RNA polymerase beta' chain family. As to quaternary structure, the RNAP catalytic core consists of 2 alpha, 1 beta/beta' and 1 omega subunit. When a sigma factor is associated with the core the holoenzyme is formed, which can initiate transcription. Mg(2+) serves as cofactor. Requires Zn(2+) as cofactor.

The enzyme catalyses RNA(n) + a ribonucleoside 5'-triphosphate = RNA(n+1) + diphosphate. DNA-dependent RNA polymerase catalyzes the transcription of DNA into RNA using the four ribonucleoside triphosphates as substrates. The protein is Bifunctional DNA-directed RNA polymerase subunit beta-beta' (rpoBC) of Helicobacter acinonychis (strain Sheeba).